We begin with the raw amino-acid sequence, 136 residues long: ATP synthase epsilon chain (136 aa).

The protein belongs to the ATPase epsilon chain family. As to quaternary structure, F-type ATPases have 2 components, CF(1) - the catalytic core - and CF(0) - the membrane proton channel. CF(1) has five subunits: alpha(3), beta(3), gamma(1), delta(1), epsilon(1). CF(0) has three main subunits: a, b and c.

The protein localises to the cell membrane. Produces ATP from ADP in the presence of a proton gradient across the membrane. The sequence is that of ATP synthase epsilon chain from Ureaplasma urealyticum serovar 10 (strain ATCC 33699 / Western).